The primary structure comprises 656 residues: Very long-chain specific acyl-CoA dehydrogenase, mitochondrial (656 aa).

The segment at 1-33 (MQSARMTPSVGRQLLRLGARSSRSTTVLQGQPR) is disordered. The transit peptide at 1–41 (MQSARMTPSVGRQLLRLGARSSRSTTVLQGQPRPISAQRLY) directs the protein to the mitochondrion. The interval 42–483 (AREATQAVLD…ALQGCMDKGK (442 aa)) is catalytic. At Lys52 the chain carries N6-acetyllysine. N6-acetyllysine; alternate occurs at positions 72 and 128. Residues Lys72 and Lys128 each carry the N6-succinyllysine; alternate modification. Lys196 is subject to N6-succinyllysine. Position 215 to 224 (215 to 224 (FCLTEPSSGS)) interacts with FAD. S-nitrosocysteine is present on Cys238. Lys240 is subject to N6-acetyllysine; alternate. Lys240 carries the N6-succinyllysine; alternate modification. Residue 250-252 (WIS) participates in FAD binding. The residue at position 269 (Lys269) is an N6-succinyllysine. Lys277 and Lys279 each carry N6-acetyllysine; alternate. 2 positions are modified to N6-succinyllysine; alternate: Lys277 and Lys279. Lys299 and Lys317 each carry N6-acetyllysine. Position 332 is an N6-acetyllysine; alternate (Lys332). The residue at position 332 (Lys332) is an N6-succinyllysine; alternate. The residue at position 373 (Lys373) is an N6-succinyllysine. Residue 462 to 464 (FEG) participates in substrate binding. Residue Glu463 is the Proton acceptor of the active site. An FAD-binding site is contributed by 465 to 467 (AND). N6-acetyllysine; alternate is present on Lys483. Lys483 bears the N6-succinyllysine; alternate mark. A membrane-anchoring region spans residues 484-517 (ELTGLGNALKNPFGNVGLLMGEAGKQLRRRTGIG). Residues Ser518 and Ser523 each carry the phosphoserine modification. An N6-acetyllysine modification is found at Lys551. Lys557 carries the N6-acetyllysine; alternate modification. N6-succinyllysine; alternate is present on Lys557. Gln563 is an FAD binding site. At Lys640 the chain carries N6-succinyllysine.

This sequence belongs to the acyl-CoA dehydrogenase family. As to quaternary structure, homodimer. Homodimerizes after import into the mitochondrion. FAD is required as a cofactor. Post-translationally, S-nitrosylation at Cys-238 in liver improves catalytic efficiency.

Its subcellular location is the mitochondrion inner membrane. It carries out the reaction a very-long-chain 2,3-saturated fatty acyl-CoA + oxidized [electron-transfer flavoprotein] + H(+) = a very-long-chain (2E)-enoyl-CoA + reduced [electron-transfer flavoprotein]. The enzyme catalyses dodecanoyl-CoA + oxidized [electron-transfer flavoprotein] + H(+) = (2E)-dodecenoyl-CoA + reduced [electron-transfer flavoprotein]. It catalyses the reaction tetradecanoyl-CoA + oxidized [electron-transfer flavoprotein] + H(+) = (2E)-tetradecenoyl-CoA + reduced [electron-transfer flavoprotein]. The catalysed reaction is oxidized [electron-transfer flavoprotein] + hexadecanoyl-CoA + H(+) = (2E)-hexadecenoyl-CoA + reduced [electron-transfer flavoprotein]. It carries out the reaction octadecanoyl-CoA + oxidized [electron-transfer flavoprotein] + H(+) = (2E)-octadecenoyl-CoA + reduced [electron-transfer flavoprotein]. The enzyme catalyses eicosanoyl-CoA + oxidized [electron-transfer flavoprotein] + H(+) = (2E)-eicosenoyl-CoA + reduced [electron-transfer flavoprotein]. It catalyses the reaction docosanoyl-CoA + oxidized [electron-transfer flavoprotein] + H(+) = (2E)-docosenoyl-CoA + reduced [electron-transfer flavoprotein]. The catalysed reaction is tetracosanoyl-CoA + oxidized [electron-transfer flavoprotein] + H(+) = (2E)-tetracosenoyl-CoA + reduced [electron-transfer flavoprotein]. It participates in lipid metabolism; mitochondrial fatty acid beta-oxidation. Functionally, very long-chain specific acyl-CoA dehydrogenase is one of the acyl-CoA dehydrogenases that catalyze the first step of mitochondrial fatty acid beta-oxidation, an aerobic process breaking down fatty acids into acetyl-CoA and allowing the production of energy from fats. The first step of fatty acid beta-oxidation consists in the removal of one hydrogen from C-2 and C-3 of the straight-chain fatty acyl-CoA thioester, resulting in the formation of trans-2-enoyl-CoA. Among the different mitochondrial acyl-CoA dehydrogenases, very long-chain specific acyl-CoA dehydrogenase acts specifically on acyl-CoAs with saturated 12 to 24 carbons long primary chains. This chain is Very long-chain specific acyl-CoA dehydrogenase, mitochondrial, found in Mus musculus (Mouse).